Reading from the N-terminus, the 390-residue chain is Fer-related kinase 1 (390 aa).

An SH2 domain is found at 23 to 119 (YYHGMVPRQD…ASGAKIRRPM (97 aa)). Residues 131 to 386 (IVANKKLGEG…SIHKKLREFY (256 aa)) form the Protein kinase domain. Residues 137-145 (LGEGAFGDV) and K161 each bind ATP. D252 serves as the catalytic Proton acceptor.

It belongs to the protein kinase superfamily. Tyr protein kinase family. Fes/fps subfamily. As to quaternary structure, interacts with hmp-2. Mn(2+) is required as a cofactor.

The protein localises to the nucleus. The protein resides in the cytoplasm. It localises to the cell junction. Its subcellular location is the cell membrane. It catalyses the reaction L-tyrosyl-[protein] + ATP = O-phospho-L-tyrosyl-[protein] + ADP + H(+). Its function is as follows. Non-receptor tyrosine-protein kinase which plays a role in morphogenesis by regulating the epidermal enclosure of the embryo, independently of its kinase activity. Prevents hyperactivation of the Wnt signaling pathway during endoderm development, probably by preventing hmp-2 nuclear translocation. The polypeptide is Fer-related kinase 1 (Caenorhabditis elegans).